Here is a 168-residue protein sequence, read N- to C-terminus: Thiol peroxidase (168 aa).

The Thioredoxin domain occupies 19–168 (PQAGSKAQAF…YDAALNVLKA (150 aa)). The Cysteine sulfenic acid (-SOH) intermediate role is filled by cysteine 61. An intrachain disulfide couples cysteine 61 to cysteine 95.

The protein belongs to the peroxiredoxin family. Tpx subfamily. Homodimer.

The enzyme catalyses a hydroperoxide + [thioredoxin]-dithiol = an alcohol + [thioredoxin]-disulfide + H2O. Its function is as follows. Thiol-specific peroxidase that catalyzes the reduction of hydrogen peroxide and organic hydroperoxides to water and alcohols, respectively. Plays a role in cell protection against oxidative stress by detoxifying peroxides. This chain is Thiol peroxidase, found in Salmonella typhimurium (strain LT2 / SGSC1412 / ATCC 700720).